A 498-amino-acid chain; its full sequence is ATP synthase subunit beta, chloroplastic (498 aa).

172–179 contributes to the ATP binding site; the sequence is GGAGVGKT.

Belongs to the ATPase alpha/beta chains family. F-type ATPases have 2 components, CF(1) - the catalytic core - and CF(0) - the membrane proton channel. CF(1) has five subunits: alpha(3), beta(3), gamma(1), delta(1), epsilon(1). CF(0) has four main subunits: a(1), b(1), b'(1) and c(9-12).

The protein localises to the plastid. The protein resides in the chloroplast thylakoid membrane. It carries out the reaction ATP + H2O + 4 H(+)(in) = ADP + phosphate + 5 H(+)(out). Its function is as follows. Produces ATP from ADP in the presence of a proton gradient across the membrane. The catalytic sites are hosted primarily by the beta subunits. The chain is ATP synthase subunit beta, chloroplastic from Lolium perenne (Perennial ryegrass).